A 188-amino-acid chain; its full sequence is Holliday junction branch migration complex subunit RuvA (188 aa).

The interval 1–63 (MIEIIEGIYK…QEDMTIYGFD (63 aa)) is domain I. The domain II stretch occupies residues 64–142 (SKVKKETFEK…VVEVNEEMLE (79 aa)). Position 142 (glutamate 142) is a region of interest, flexible linker. The interval 142-188 (EAIEALVSLGYSKTQARNAVSKVLKESPNISNVSKIIKEALKILAKI) is domain III.

The protein belongs to the RuvA family. Homotetramer. Forms an RuvA(8)-RuvB(12)-Holliday junction (HJ) complex. HJ DNA is sandwiched between 2 RuvA tetramers; dsDNA enters through RuvA and exits via RuvB. An RuvB hexamer assembles on each DNA strand where it exits the tetramer. Each RuvB hexamer is contacted by two RuvA subunits (via domain III) on 2 adjacent RuvB subunits; this complex drives branch migration. In the full resolvosome a probable DNA-RuvA(4)-RuvB(12)-RuvC(2) complex forms which resolves the HJ.

Its subcellular location is the cytoplasm. Functionally, the RuvA-RuvB-RuvC complex processes Holliday junction (HJ) DNA during genetic recombination and DNA repair, while the RuvA-RuvB complex plays an important role in the rescue of blocked DNA replication forks via replication fork reversal (RFR). RuvA specifically binds to HJ cruciform DNA, conferring on it an open structure. The RuvB hexamer acts as an ATP-dependent pump, pulling dsDNA into and through the RuvAB complex. HJ branch migration allows RuvC to scan DNA until it finds its consensus sequence, where it cleaves and resolves the cruciform DNA. This is Holliday junction branch migration complex subunit RuvA from Fervidobacterium nodosum (strain ATCC 35602 / DSM 5306 / Rt17-B1).